Consider the following 563-residue polypeptide: Chaperonin GroEL 1 (563 aa).

ATP is bound by residues 29 to 32 (TIGP), 86 to 90 (DGTTT), Gly-413, and Asp-492. The interval 520-541 (DKPEPPSAPGAEGGDPMGGMGG) is disordered. Positions 530–541 (AEGGDPMGGMGG) are enriched in gly residues.

It belongs to the chaperonin (HSP60) family. In terms of assembly, forms a cylinder of 14 subunits composed of two heptameric rings stacked back-to-back. Interacts with the co-chaperonin GroES.

It localises to the cytoplasm. The enzyme catalyses ATP + H2O + a folded polypeptide = ADP + phosphate + an unfolded polypeptide.. In terms of biological role, together with its co-chaperonin GroES, plays an essential role in assisting protein folding. The GroEL-GroES system forms a nano-cage that allows encapsulation of the non-native substrate proteins and provides a physical environment optimized to promote and accelerate protein folding. The sequence is that of Chaperonin GroEL 1 from Prochlorococcus marinus (strain NATL1A).